The sequence spans 323 residues: Large ribosomal subunit protein uL10 (323 aa).

The interval A298–F323 is disordered. The span at E307–F317 shows a compositional bias: acidic residues.

It belongs to the universal ribosomal protein uL10 family. In terms of assembly, P0 forms a pentameric complex by interaction with dimers of P1 and P2. Post-translationally, phosphorylated.

Its function is as follows. Ribosomal protein P0 is the functional equivalent of E.coli protein L10. The protein is Large ribosomal subunit protein uL10 of Trypanosoma cruzi.